Consider the following 326-residue polypeptide: Beta-ketoacyl-[acyl-carrier-protein] synthase III (326 aa).

Catalysis depends on residues cysteine 112 and histidine 251. Residues 252–256 (QANSR) are ACP-binding. Asparagine 281 is a catalytic residue.

The protein belongs to the thiolase-like superfamily. FabH family. In terms of assembly, homodimer.

The protein localises to the cytoplasm. The catalysed reaction is malonyl-[ACP] + acetyl-CoA + H(+) = 3-oxobutanoyl-[ACP] + CO2 + CoA. The protein operates within lipid metabolism; fatty acid biosynthesis. Catalyzes the condensation reaction of fatty acid synthesis by the addition to an acyl acceptor of two carbons from malonyl-ACP. Catalyzes the first condensation reaction which initiates fatty acid synthesis and may therefore play a role in governing the total rate of fatty acid production. Possesses both acetoacetyl-ACP synthase and acetyl transacylase activities. Its substrate specificity determines the biosynthesis of branched-chain and/or straight-chain of fatty acids. This Clostridium botulinum (strain Kyoto / Type A2) protein is Beta-ketoacyl-[acyl-carrier-protein] synthase III.